The chain runs to 117 residues: MARVKRGVIARARHKKVLKAAKGYYGARSRVYRVAFQAVIKAGQYAYRDRRQRKRQFRQLWIARINAAARQNGLSYSKFINGLKKVSVEIDRKILADIAVFDKVAFAALVEKAKSAL.

It belongs to the bacterial ribosomal protein bL20 family.

Functionally, binds directly to 23S ribosomal RNA and is necessary for the in vitro assembly process of the 50S ribosomal subunit. It is not involved in the protein synthesizing functions of that subunit. This Actinobacillus pleuropneumoniae serotype 7 (strain AP76) protein is Large ribosomal subunit protein bL20.